A 273-amino-acid polypeptide reads, in one-letter code: 2,3,4,5-tetrahydropyridine-2,6-dicarboxylate N-succinyltransferase (273 aa).

Positions 106 and 143 each coordinate substrate.

Belongs to the transferase hexapeptide repeat family. Homotrimer.

Its subcellular location is the cytoplasm. It catalyses the reaction (S)-2,3,4,5-tetrahydrodipicolinate + succinyl-CoA + H2O = (S)-2-succinylamino-6-oxoheptanedioate + CoA. Its pathway is amino-acid biosynthesis; L-lysine biosynthesis via DAP pathway; LL-2,6-diaminopimelate from (S)-tetrahydrodipicolinate (succinylase route): step 1/3. This is 2,3,4,5-tetrahydropyridine-2,6-dicarboxylate N-succinyltransferase from Wolbachia sp. subsp. Brugia malayi (strain TRS).